The following is a 305-amino-acid chain: Mat- sexual cell fertilization-promoting factor (305 aa).

Positions 38–93 form a DNA-binding region, alpha box; that stretch reads PAKKKVNGFMGYRSYYSSMFSQLPQKERSPILTTLWQQDPFHKEWDFMCAVYSAIR.

Belongs to the MATALPHA1 family.

It is found in the nucleus. Its function is as follows. Controls fertilization, probably by determining the mating type. May be involved in the post-fertilization steps of the sexual cycle besides mat+. It is required for the developmental events that occur in the female organ after fertilization. The protein is Mat- sexual cell fertilization-promoting factor (FMR1) of Podospora anserina (Pleurage anserina).